Consider the following 755-residue polypeptide: Glucosylglycerol-phosphate synthase (755 aa).

Belongs to the glycosyltransferase 20 family.

The catalysed reaction is ADP-alpha-D-glucose + sn-glycerol 3-phosphate = 2-O-(alpha-D-glucopyranosyl)-sn-glycerol 3-phosphate + ADP + H(+). The protein operates within glycan metabolism; glucosylglycerol biosynthesis. Functionally, involved in salt tolerance by producing GG-phosphate from ADP-glucose and glycerol-3-phosphate (G3P), an intermediate in the synthesis of the osmolyte glucosylglycerol (GG). The sequence is that of Glucosylglycerol-phosphate synthase (ggpS) from Pseudomonas anguilliseptica.